Consider the following 505-residue polypeptide: Succinyl-CoA:acetate CoA-transferase (505 aa).

269–273 serves as a coordination point for CoA; that stretch reads GVGNV. Catalysis depends on E294, which acts as the 5-glutamyl coenzyme A thioester intermediate. CoA contacts are provided by I364, N384, G388, and K408.

This sequence belongs to the acetyl-CoA hydrolase/transferase family. As to quaternary structure, homodimer.

The enzyme catalyses succinyl-CoA + acetate = succinate + acetyl-CoA. Its pathway is metabolic intermediate biosynthesis; acetyl-CoA biosynthesis. With respect to regulation, subject to competitive inhibition by coenzyme A (CoA). Its function is as follows. Utilizes succinyl-CoA to convert toxic acetate to acetyl-CoA and succinate. Required for growth on acetic acid and for resistance to high levels of acetic acid. Also has low activity with acetoacetate as substrate. The chain is Succinyl-CoA:acetate CoA-transferase from Acetobacter aceti.